The primary structure comprises 609 residues: Proteasome-associated ATPase (609 aa).

Residues 1 to 25 (MADSERSEAFGTPDDTPLSSNDAAE) are disordered. Residues 19-96 (SSNDAAELEQ…LREEVDRLGQ (78 aa)) are a coiled coil. 296-301 (GCGKTL) contributes to the ATP binding site. Residues 608–609 (YL) form a docks into pockets in the proteasome alpha-ring region.

Belongs to the AAA ATPase family. As to quaternary structure, homohexamer. Assembles into a hexameric ring structure that caps the 20S proteasome core. Strongly interacts with the prokaryotic ubiquitin-like protein Pup through a hydrophobic interface; the interacting region of ARC lies in its N-terminal coiled-coil domain. There is one Pup binding site per ARC hexamer ring. Upon ATP-binding, the C-terminus of ARC interacts with the alpha-rings of the proteasome core, possibly by binding to the intersubunit pockets.

It functions in the pathway protein degradation; proteasomal Pup-dependent pathway. ATPase which is responsible for recognizing, binding, unfolding and translocation of pupylated proteins into the bacterial 20S proteasome core particle. May be essential for opening the gate of the 20S proteasome via an interaction with its C-terminus, thereby allowing substrate entry and access to the site of proteolysis. Thus, the C-termini of the proteasomal ATPase may function like a 'key in a lock' to induce gate opening and therefore regulate proteolysis. The polypeptide is Proteasome-associated ATPase (Mycobacterium marinum (strain ATCC BAA-535 / M)).